A 296-amino-acid polypeptide reads, in one-letter code: Fructose-bisphosphate aldolase class 1 (296 aa).

The active-site Proton acceptor is the glutamate 175. Lysine 212 acts as the Schiff-base intermediate with dihydroxyacetone-P in catalysis.

The protein belongs to the class I fructose-bisphosphate aldolase family.

It catalyses the reaction beta-D-fructose 1,6-bisphosphate = D-glyceraldehyde 3-phosphate + dihydroxyacetone phosphate. Its pathway is carbohydrate degradation; glycolysis; D-glyceraldehyde 3-phosphate and glycerone phosphate from D-glucose: step 4/4. In Staphylococcus aureus (strain MRSA252), this protein is Fructose-bisphosphate aldolase class 1.